We begin with the raw amino-acid sequence, 214 residues long: Outer-membrane lipoprotein LolB (214 aa).

Residues 1 to 25 form the signal peptide; that stretch reads MNNLKRLTKTIFSCFTLSALLLLAG. The N-palmitoyl cysteine moiety is linked to residue Cys26. Cys26 is lipidated: S-diacylglycerol cysteine. The segment covering 143 to 160 has biased composition (polar residues); it reads QVIESDSQGKPKQLTNTQ. Residues 143–163 are disordered; that stretch reads QVIESDSQGKPKQLTNTQTPP.

This sequence belongs to the LolB family. As to quaternary structure, monomer.

The protein localises to the cell outer membrane. Plays a critical role in the incorporation of lipoproteins in the outer membrane after they are released by the LolA protein. The sequence is that of Outer-membrane lipoprotein LolB from Shewanella baltica (strain OS223).